The chain runs to 276 residues: Large ribosomal subunit protein uL2 (276 aa).

The interval 224-265 is disordered; that stretch reads GTAMNPIDHPHGGGEGKNFGKHPVSPWGVQTKGKRTRSNKRT.

This sequence belongs to the universal ribosomal protein uL2 family. Part of the 50S ribosomal subunit. Forms a bridge to the 30S subunit in the 70S ribosome.

One of the primary rRNA binding proteins. Required for association of the 30S and 50S subunits to form the 70S ribosome, for tRNA binding and peptide bond formation. It has been suggested to have peptidyltransferase activity; this is somewhat controversial. Makes several contacts with the 16S rRNA in the 70S ribosome. In Blochmanniella floridana, this protein is Large ribosomal subunit protein uL2.